Consider the following 431-residue polypeptide: Trigger factor (431 aa).

The PPIase FKBP-type domain occupies 165-250 (TDTAVFDFEG…LHQIKTKKIP (86 aa)).

The protein belongs to the FKBP-type PPIase family. Tig subfamily.

The protein localises to the cytoplasm. It carries out the reaction [protein]-peptidylproline (omega=180) = [protein]-peptidylproline (omega=0). In terms of biological role, involved in protein export. Acts as a chaperone by maintaining the newly synthesized protein in an open conformation. Functions as a peptidyl-prolyl cis-trans isomerase. This Aster yellows witches'-broom phytoplasma (strain AYWB) protein is Trigger factor.